The sequence spans 348 residues: WW domain binding protein 1-like (348 aa).

A helical transmembrane segment spans residues 42–62 (LWWFWLVWTVVIILSCCCVCH). Disordered regions lie at residues 111–253 (VVNR…RRFT) and 306–348 (CLSS…GSPS). A compositionally biased stretch (pro residues) spans 134–155 (LPPPPQGGPPGGSPPGADPPPQ). Over residues 156 to 177 (GSQGAQSSPLSGPSRSSTRPPS) the composition is skewed to low complexity. Ser-177 is modified (phosphoserine). Over residues 220-234 (SECKEELLKDSRSER) the composition is skewed to basic and acidic residues. Residues 331–348 (NTINEQDSPNSQHSGSPS) are compositionally biased toward polar residues.

The protein localises to the membrane. The protein is WW domain binding protein 1-like (Wbp1l) of Mus musculus (Mouse).